A 314-amino-acid polypeptide reads, in one-letter code: Ribosomal protein uL3 glutamine methyltransferase (314 aa).

This sequence belongs to the protein N5-glutamine methyltransferase family. PrmB subfamily.

It catalyses the reaction L-glutaminyl-[ribosomal protein uL3] + S-adenosyl-L-methionine = N(5)-methyl-L-glutaminyl-[ribosomal protein uL3] + S-adenosyl-L-homocysteine + H(+). Functionally, methylates large ribosomal subunit protein uL3 on a specific glutamine residue. This chain is Ribosomal protein uL3 glutamine methyltransferase, found in Shewanella oneidensis (strain ATCC 700550 / JCM 31522 / CIP 106686 / LMG 19005 / NCIMB 14063 / MR-1).